We begin with the raw amino-acid sequence, 101 residues long: Ribonuclease P protein component 1 (101 aa).

Belongs to the eukaryotic/archaeal RNase P protein component 1 family. As to quaternary structure, consists of a catalytic RNA component and at least 4-5 protein subunits.

The protein resides in the cytoplasm. The enzyme catalyses Endonucleolytic cleavage of RNA, removing 5'-extranucleotides from tRNA precursor.. Functionally, part of ribonuclease P, a protein complex that generates mature tRNA molecules by cleaving their 5'-ends. The sequence is that of Ribonuclease P protein component 1 from Methanococcoides burtonii (strain DSM 6242 / NBRC 107633 / OCM 468 / ACE-M).